The sequence spans 155 residues: Antitoxin HicB 1 (155 aa).

Residues 99–153 (MLNAFLDSKLTQIELANRMGVKKQEVTRIFDLRHSTKIDTVGKVASAIGHQLTLS) enclose the HTH cro/C1-type domain. Positions 110-129 (QIELANRMGVKKQEVTRIFD) form a DNA-binding region, H-T-H motif.

Belongs to the HicB antitoxin family. As to quaternary structure, probably forms a complex with the probable mRNA interferase HicA1 (its cognate toxin); when complexed with HicA 1 inhibits the toxin activity.

Its function is as follows. Antitoxin component of a type II toxin-antitoxin (TA) system. Functions as an mRNA interferase antitoxin preventing effects of the HicA 1 toxin. The protein is Antitoxin HicB 1 (hicB1) of Photorhabdus laumondii subsp. laumondii (strain DSM 15139 / CIP 105565 / TT01) (Photorhabdus luminescens subsp. laumondii).